Here is a 432-residue protein sequence, read N- to C-terminus: 5-methylthioadenosine/S-adenosylhomocysteine deaminase (432 aa).

The Zn(2+) site is built by histidine 62 and histidine 64. Residues glutamate 91 and histidine 184 each contribute to the substrate site. Histidine 211 is a Zn(2+) binding site. The substrate site is built by glutamate 214 and aspartate 299. Aspartate 299 lines the Zn(2+) pocket.

Belongs to the metallo-dependent hydrolases superfamily. MTA/SAH deaminase family. Zn(2+) serves as cofactor.

It carries out the reaction S-adenosyl-L-homocysteine + H2O + H(+) = S-inosyl-L-homocysteine + NH4(+). The catalysed reaction is S-methyl-5'-thioadenosine + H2O + H(+) = S-methyl-5'-thioinosine + NH4(+). In terms of biological role, catalyzes the deamination of 5-methylthioadenosine and S-adenosyl-L-homocysteine into 5-methylthioinosine and S-inosyl-L-homocysteine, respectively. Is also able to deaminate adenosine. The polypeptide is 5-methylthioadenosine/S-adenosylhomocysteine deaminase (Haloarcula marismortui (strain ATCC 43049 / DSM 3752 / JCM 8966 / VKM B-1809) (Halobacterium marismortui)).